The chain runs to 218 residues: Small ribosomal subunit protein uS3c (218 aa).

Residues 47-118 enclose the KH type-2 domain; the sequence is IQKTIKISSG…KLNIAITRIA (72 aa).

This sequence belongs to the universal ribosomal protein uS3 family. Part of the 30S ribosomal subunit.

The protein localises to the plastid. Its subcellular location is the chloroplast. This chain is Small ribosomal subunit protein uS3c (rps3), found in Lotus japonicus (Lotus corniculatus var. japonicus).